The primary structure comprises 262 residues: Dihydroorotate dehydrogenase B (NAD(+)), electron transfer subunit (262 aa).

One can recognise an FAD-binding FR-type domain in the interval lysine 3–valine 104. FAD contacts are provided by residues arginine 53–serine 56, leucine 70–arginine 72, and glycine 79–threonine 80. [2Fe-2S] cluster contacts are provided by cysteine 226, cysteine 231, cysteine 234, and cysteine 249.

It belongs to the PyrK family. Heterotetramer of 2 PyrK and 2 PyrD type B subunits. It depends on [2Fe-2S] cluster as a cofactor. Requires FAD as cofactor.

Its pathway is pyrimidine metabolism; UMP biosynthesis via de novo pathway; orotate from (S)-dihydroorotate (NAD(+) route): step 1/1. Responsible for channeling the electrons from the oxidation of dihydroorotate from the FMN redox center in the PyrD type B subunit to the ultimate electron acceptor NAD(+). In Lactococcus lactis subsp. lactis (strain IL1403) (Streptococcus lactis), this protein is Dihydroorotate dehydrogenase B (NAD(+)), electron transfer subunit.